Consider the following 615-residue polypeptide: Probable methylmalonyl-CoA mutase small subunit (615 aa).

The protein belongs to the methylmalonyl-CoA mutase family. As to quaternary structure, heterodimer of an alpha and a beta chain. Adenosylcob(III)alamin serves as cofactor.

The catalysed reaction is (R)-methylmalonyl-CoA = succinyl-CoA. The protein operates within metabolic intermediate metabolism; propanoyl-CoA degradation; succinyl-CoA from propanoyl-CoA: step 3/3. Its function is as follows. Catalyzes the isomerization of succinyl-CoA to methylmalonyl-CoA during synthesis of propionate from tricarboxylic acid-cycle intermediates. The chain is Probable methylmalonyl-CoA mutase small subunit (mutA) from Mycobacterium bovis (strain ATCC BAA-935 / AF2122/97).